A 561-amino-acid chain; its full sequence is Probable oligo-1,6-glucosidase 2 (561 aa).

Catalysis depends on D199, which acts as the Nucleophile. E255 serves as the catalytic Proton donor.

The protein belongs to the glycosyl hydrolase 13 family.

It localises to the cytoplasm. It carries out the reaction Hydrolysis of (1-&gt;6)-alpha-D-glucosidic linkages in some oligosaccharides produced from starch and glycogen by alpha-amylase, and in isomaltose.. This is Probable oligo-1,6-glucosidase 2 (ycdG) from Bacillus subtilis (strain 168).